Consider the following 476-residue polypeptide: FAD-dependent monooxygenase prhF (476 aa).

3 residues coordinate FAD: E41, G55, and R114. The active site involves Y222. Residues D314 and A327 each contribute to the FAD site. N343 carries N-linked (GlcNAc...) asparagine glycosylation. The helical transmembrane segment at 447 to 467 (LGSTPIQMLTLLLPCLFYFMY) threads the bilayer. N471 is a glycosylation site (N-linked (GlcNAc...) asparagine).

It belongs to the paxM FAD-dependent monooxygenase family. FAD serves as cofactor.

The protein resides in the membrane. It functions in the pathway secondary metabolite biosynthesis; terpenoid biosynthesis. Functionally, FAD-dependent monooxygenase; part of the gene cluster that mediates the biosynthesis of paraherquonin, a meroterpenoid with a unique, highly congested hexacyclic molecular architecture. The first step of the pathway is the synthesis of 3,5-dimethylorsellinic acid (DMOA) by the polyketide synthase prhL. Synthesis of DMOA is followed by farnesylation by the prenyltransferase prhE, methylesterification by the methyl-transferase prhM, epoxidation of the prenyl chain by the flavin-dependent monooxygenase prhF, and cyclization of the farnesyl moiety by the terpene cyclase prhH, to yield the tetracyclic intermediate, protoaustinoid A. The short chain dehydrogenase prhI then oxidizes the C-3 alcohol group of the terpene cyclase product to transform protoaustinoid A into protoaustinoid B. The FAD-binding monooxygenase prhJ catalyzes the oxidation of protoaustinoid B into preaustinoid A which is further oxidized into preaustinoid A1 by FAD-binding monooxygenase phrK. Finally, prhA leads to berkeleydione via the berkeleyone B intermediate. PrhA is a multifunctional dioxygenase that first desaturates at C5-C6 to form berkeleyone B, followed by rearrangement of the A/B-ring to form the cycloheptadiene moiety in berkeleydione. Berkeleydione serves as the key intermediate for the biosynthesis of paraherquonin as well as many other meroterpenoids. The cytochrome P450 monooxygenases prhB, prhD, and prhN, as well as the isomerase prhC, are probably involved in the late stage of paraherquonin biosynthesis, after the production of berkeleydione. Especially prhC might be a multifunctional enzyme that catalyzes the D-ring expansion via intramolecular methoxy rearrangement, as well as the hydrolysis of the expanded D-ring. The sequence is that of FAD-dependent monooxygenase prhF from Penicillium brasilianum.